The primary structure comprises 406 residues: DNA-binding transcriptional repressor Mlc (406 aa).

Positions 33-42 (RIDLSRLAQL) form a DNA-binding region, H-T-H motif. Histidine 247, cysteine 257, cysteine 259, and cysteine 264 together coordinate Zn(2+).

It belongs to the ROK (NagC/XylR) family. In terms of assembly, homodimer. Homotetramer. There is probably an equilibrium between the dimeric and the tetrameric form. Interacts with dephosphorylated PtsG. Mlc and PtsG EIIB domain form a complex with the 1:1 stoichiometry. Interacts with MtfA.

The protein resides in the cytoplasm. With respect to regulation, activity is modulated by glucose. In the presence of glucose, is inhibited by interaction with the dephosphorylated form of PtsG, which sequesters Mlc in the inner membrane and prevents Mlc binding to its target promoters. The restriction of conformational freedom resulting from the anchoring of four ends of Mlc to the membrane could be the primary cause of its loss of DNA-binding activity in vivo. Activity is also inhibited by interaction with the Mlc titration factor A (mtfA). The inactivation mechanisms of Mlc by dephosphorylated PtsG and MtfA differ significantly. In terms of biological role, global regulator of carbohydrate metabolism. Represses the expression of several genes involved in sugar transport and utilization, in particular phosphoenolpyruvate-carbohydrate phosphotransferase system (PTS) genes. Represses expression of ptsG (EIICB(Glc)), which encodes the PTS system glucose-specific EIICB component. Also represses the expression of the manXYZ operon, encoding the mannose-specific PTS system, expression of malT, encoding the transcriptional activator of the maltose regulon, and expression of the pts operon, composed of the genes ptsH, ptsI and crr. Represses its own expression. Acts by binding to the regulatory region of the target genes. This is DNA-binding transcriptional repressor Mlc from Escherichia coli (strain K12).